A 364-amino-acid polypeptide reads, in one-letter code: Transcription factor TGA4 (364 aa).

Positions 39–79 (PGSIIIPTNEKPDSLSEDTSHGTEGTPHKFDQEASTSRHPD) are disordered. Residues 48 to 79 (EKPDSLSEDTSHGTEGTPHKFDQEASTSRHPD) are compositionally biased toward basic and acidic residues. A bZIP domain is found at 78–141 (PDKIQRRLAQ…NGVDTNALSF (64 aa)). 2 coiled-coil regions span residues 79-127 (DKIQ…RQQG) and 257-277 (NLRQ…EKLQ). The basic motif stretch occupies residues 80–100 (KIQRRLAQNREAARKSRLRKK). The leucine-zipper stretch occupies residues 106 to 120 (LETSRLKLIHLEQEL). Residues 149 to 359 (IVAFEMEYGH…RALSSSWAAR (211 aa)) form the DOG1 domain. The cysteines at positions 256 and 262 are disulfide-linked.

The protein belongs to the bZIP family. In terms of assembly, binds DNA as a dimer. Interaction with the Dof domain proteins OBP1, OBP2 or OBP3 enhances the binding to the ocs element. Interacts with RAP2-3/EPB, an ethylene-responsive element binding protein. The reduced form interacts with NPR1. As to expression, predominantly expressed in roots.

The protein resides in the nucleus. Transcriptional activator that binds specifically to the DNA sequence 5'-TGACG-3'. Recognizes ocs elements like the as-1 motif of the cauliflower mosaic virus 35S promoter. Binding to the as-1-like cis elements mediate auxin- and salicylic acid-inducible transcription. May be involved in the induction of the systemic acquired resistance (SAR) via its interaction with NPR1. Could also bind to the Hex-motif (5'-TGACGTGG-3') another cis-acting element found in plant histone promoters. This chain is Transcription factor TGA4 (TGA4), found in Arabidopsis thaliana (Mouse-ear cress).